The chain runs to 427 residues: Beta-porphyranase D (427 aa).

The first 19 residues, 1 to 19 (MILKQAILTLVLVNANLFA), serve as a signal peptide directing secretion. Residues 23–45 (PKTYSSTDKETRQGPPKPPMGKR) are disordered. One can recognise a GH16 domain in the interval 32 to 308 (ETRQGPPKPP…WVRAYRLVDV (277 aa)). Tryptophan 73, arginine 76, glutamate 168, glutamate 173, and glutamate 272 together coordinate substrate. Glutamate 168 acts as the Nucleophile in catalysis. The active-site Proton donor is glutamate 173.

Belongs to the glycosyl hydrolase 16 family.

It is found in the periplasm. The catalysed reaction is Hydrolysis of beta-D-galactopyranose-(1-&gt;4)-alpha-L-galactopyranose-6-sulfate linkages in porphyran.. Functionally, cleaves the sulfated polysaccharide porphyran at the (1-&gt;4) linkages between beta-D-galactopyranose and alpha-L-galactopyranose-6-sulfate, forming mostly the disaccharide alpha-L-galactopyranose-6-sulfate-(1-&gt;3)-beta-D-galactose. The protein is Beta-porphyranase D (porD) of Zobellia galactanivorans (strain DSM 12802 / CCUG 47099 / CIP 106680 / NCIMB 13871 / Dsij).